We begin with the raw amino-acid sequence, 301 residues long: Protein phosphatase 1 regulatory subunit 3B (301 aa).

The PP1-binding motif motif lies at arginine 79–phenylalanine 82. One can recognise a CBM21 domain in the interval arginine 142–valine 250.

Interacts with glycogen, PPP1CC catalytic subunit of PP1 and PYGL. Associates with glycogen particles. Forms complexes with debranching enzyme, glycogen phosphorylase, glycogen synthase and phosphorylase kinase which is necessary for its regulation of PP1 activity.

In terms of biological role, acts as a glycogen-targeting subunit for phosphatase PP1. Facilitates interaction of the PP1 with enzymes of the glycogen metabolism and regulates its activity. Suppresses the rate at which PP1 dephosphorylates (inactivates) glycogen phosphorylase and enhances the rate at which it activates glycogen synthase and therefore limits glycogen breakdown. The chain is Protein phosphatase 1 regulatory subunit 3B (ppp1r3b) from Xenopus tropicalis (Western clawed frog).